A 395-amino-acid chain; its full sequence is Yellow-related salivary protein M35 (395 aa).

Residues 1–18 form the signal peptide; it reads MKLILTVLAFLSLQVALS.

Belongs to the major royal jelly protein family. As to expression, salivary gland (at protein level).

It is found in the secreted. Probably modulates blood feeding of sand flies on vertebrate species by binding and sequestering different mediators involved in the host response. Functions as a chemoattractant for host neutrophils; likely acts through a G-protein-coupled receptor and effect is dependent on calcium influx and phosphatidylinositol 3-kinases (PI3K) activity. Functionally, (Microbial infection) Probably enhances infection caused by Leishmania species in the host through augmentation of host neutrophil recruitment into the skin. The polypeptide is Yellow-related salivary protein M35 (Phlebotomus duboscqi (Sandfly)).